The following is a 1042-amino-acid chain: Probable serine/threonine protein kinase IRE4 (1042 aa).

Basic and acidic residues-rich tracts occupy residues M1 to G10, E102 to E115, and Q314 to K327. Disordered regions lie at residues M1–L75, P90–E115, and W297–K327. The C2H2-type; atypical zinc finger occupies C402–C421. The Protein kinase domain occupies F670–F955. ATP is bound by residues I676–V684 and K699. Residue D793 is the Proton acceptor of the active site. The interval E830–R850 is disordered. A Phosphoserine modification is found at S854. The AGC-kinase C-terminal domain maps to Q956–F1042.

Belongs to the protein kinase superfamily. AGC Ser/Thr protein kinase family.

It catalyses the reaction L-seryl-[protein] + ATP = O-phospho-L-seryl-[protein] + ADP + H(+). The catalysed reaction is L-threonyl-[protein] + ATP = O-phospho-L-threonyl-[protein] + ADP + H(+). This Arabidopsis thaliana (Mouse-ear cress) protein is Probable serine/threonine protein kinase IRE4.